Reading from the N-terminus, the 367-residue chain is Probable dual-specificity RNA methyltransferase RlmN (367 aa).

The Proton acceptor role is filled by Glu-92. The Radical SAM core domain maps to Gln-98–Asn-326. Cys-105 and Cys-341 form a disulfide bridge. [4Fe-4S] cluster-binding residues include Cys-112, Cys-116, and Cys-119. S-adenosyl-L-methionine-binding positions include Gly-164–Glu-165, Ser-196, Ser-219–His-221, and Asn-297. Cys-341 acts as the S-methylcysteine intermediate in catalysis.

Belongs to the radical SAM superfamily. RlmN family. The cofactor is [4Fe-4S] cluster.

The protein localises to the cytoplasm. It carries out the reaction adenosine(2503) in 23S rRNA + 2 reduced [2Fe-2S]-[ferredoxin] + 2 S-adenosyl-L-methionine = 2-methyladenosine(2503) in 23S rRNA + 5'-deoxyadenosine + L-methionine + 2 oxidized [2Fe-2S]-[ferredoxin] + S-adenosyl-L-homocysteine. The catalysed reaction is adenosine(37) in tRNA + 2 reduced [2Fe-2S]-[ferredoxin] + 2 S-adenosyl-L-methionine = 2-methyladenosine(37) in tRNA + 5'-deoxyadenosine + L-methionine + 2 oxidized [2Fe-2S]-[ferredoxin] + S-adenosyl-L-homocysteine. Functionally, specifically methylates position 2 of adenine 2503 in 23S rRNA and position 2 of adenine 37 in tRNAs. The chain is Probable dual-specificity RNA methyltransferase RlmN from Listeria welshimeri serovar 6b (strain ATCC 35897 / DSM 20650 / CCUG 15529 / CIP 8149 / NCTC 11857 / SLCC 5334 / V8).